The primary structure comprises 243 residues: Adenosylcobinamide-GDP ribazoletransferase (243 aa).

Transmembrane regions (helical) follow at residues 33–53 (FLPV…LLAP), 59–79 (IIIV…HIDG), 105–125 (IGAF…TLAY), 127–147 (TENM…VFAA), 172–192 (VISI…GAII), and 223–243 (TIEI…SIII).

The protein belongs to the CobS family. Mg(2+) is required as a cofactor.

It is found in the cell membrane. The enzyme catalyses alpha-ribazole + adenosylcob(III)inamide-GDP = adenosylcob(III)alamin + GMP + H(+). The catalysed reaction is alpha-ribazole 5'-phosphate + adenosylcob(III)inamide-GDP = adenosylcob(III)alamin 5'-phosphate + GMP + H(+). The protein operates within cofactor biosynthesis; adenosylcobalamin biosynthesis; adenosylcobalamin from cob(II)yrinate a,c-diamide: step 7/7. Joins adenosylcobinamide-GDP and alpha-ribazole to generate adenosylcobalamin (Ado-cobalamin). Also synthesizes adenosylcobalamin 5'-phosphate from adenosylcobinamide-GDP and alpha-ribazole 5'-phosphate. The protein is Adenosylcobinamide-GDP ribazoletransferase of Alkaliphilus oremlandii (strain OhILAs) (Clostridium oremlandii (strain OhILAs)).